A 389-amino-acid polypeptide reads, in one-letter code: uncharacterized protein (389 aa).

The next 4 membrane-spanning stretches (helical) occupy residues 31 to 51 (LFIV…VEVI), 96 to 116 (IMQI…ALLV), 123 to 143 (APLV…MFPP), and 152 to 172 (MIDA…LPSS).

To M.tuberculosis Rv2571c.

The protein resides in the cell membrane. This is an uncharacterized protein from Corynebacterium glutamicum (strain ATCC 13032 / DSM 20300 / JCM 1318 / BCRC 11384 / CCUG 27702 / LMG 3730 / NBRC 12168 / NCIMB 10025 / NRRL B-2784 / 534).